A 324-amino-acid polypeptide reads, in one-letter code: NADH-ubiquinone oxidoreductase chain 1 (324 aa).

The next 8 helical transmembrane spans lie at 9–29, 75–95, 106–126, 142–162, 177–197, 228–248, 259–279, and 300–320; these read LTMA…LTLV, ILFI…WIPL, LGLL…LWSG, VAQT…VIML, PLYL…STLA, LFFL…AILF, ELFP…FLWV, and LPLT…YAGI.

This sequence belongs to the complex I subunit 1 family.

Its subcellular location is the mitochondrion inner membrane. It carries out the reaction a ubiquinone + NADH + 5 H(+)(in) = a ubiquinol + NAD(+) + 4 H(+)(out). Core subunit of the mitochondrial membrane respiratory chain NADH dehydrogenase (Complex I) that is believed to belong to the minimal assembly required for catalysis. Complex I functions in the transfer of electrons from NADH to the respiratory chain. The immediate electron acceptor for the enzyme is believed to be ubiquinone. The chain is NADH-ubiquinone oxidoreductase chain 1 (MT-ND1) from Struthio camelus (Common ostrich).